Consider the following 153-residue polypeptide: Peptide deformylase (153 aa).

Fe cation-binding residues include C87 and H129. The active site involves E130. H133 lines the Fe cation pocket.

Belongs to the polypeptide deformylase family. The cofactor is Fe(2+).

It catalyses the reaction N-terminal N-formyl-L-methionyl-[peptide] + H2O = N-terminal L-methionyl-[peptide] + formate. In terms of biological role, removes the formyl group from the N-terminal Met of newly synthesized proteins. Requires at least a dipeptide for an efficient rate of reaction. N-terminal L-methionine is a prerequisite for activity but the enzyme has broad specificity at other positions. The sequence is that of Peptide deformylase from Dictyoglomus turgidum (strain DSM 6724 / Z-1310).